The sequence spans 806 residues: ATP-dependent zinc metalloprotease FTSH 9, chloroplastic (806 aa).

A chloroplast-targeting transit peptide spans 1-62 (MTSIELLSPL…SSIQLPQSVP (62 aa)). The tract at residues 84 to 116 (SSRTIVNCQEGDQKASSSEGEGKTNKDKGRKQG) is disordered. Transmembrane regions (helical) follow at residues 133 to 153 (IIQA…MFVV) and 271 to 291 (GGFF…AGLL). 369–376 (GLPGTGKT) is a binding site for ATP. A Zn(2+)-binding site is contributed by His-594. Glu-595 is an active-site residue. 2 residues coordinate Zn(2+): His-598 and Asp-677.

This sequence in the N-terminal section; belongs to the AAA ATPase family. In the C-terminal section; belongs to the peptidase M41 family. It depends on Zn(2+) as a cofactor.

The protein localises to the plastid. The protein resides in the chloroplast thylakoid membrane. In terms of biological role, probable ATP-dependent zinc metallopeptidase. This chain is ATP-dependent zinc metalloprotease FTSH 9, chloroplastic (FTSH9), found in Arabidopsis thaliana (Mouse-ear cress).